The following is a 160-amino-acid chain: Eukaryotic translation initiation factor 5A (160 aa).

Residues 1-13 (MSDSEEHHFESKA) show a composition bias toward basic and acidic residues. The segment at 1–22 (MSDSEEHHFESKADAGASKTYP) is disordered. Lys-53 is modified (hypusine).

It belongs to the eIF-5A family. In terms of processing, lys-53 undergoes hypusination, a unique post-translational modification that consists in the addition of a butylamino group from spermidine to lysine side chain, leading to the formation of the unusual amino acid hypusine. eIF-5As are the only known proteins to undergo this modification, which is essential for their function.

Its function is as follows. Translation factor that promotes translation elongation and termination, particularly upon ribosome stalling at specific amino acid sequence contexts. Binds between the exit (E) and peptidyl (P) site of the ribosome and promotes rescue of stalled ribosome: specifically required for efficient translation of polyproline-containing peptides as well as other motifs that stall the ribosome. Acts as a ribosome quality control (RQC) cofactor by joining the RQC complex to facilitate peptidyl transfer during CAT tailing step. The sequence is that of Eukaryotic translation initiation factor 5A (TIF5A) from Zea mays (Maize).